A 95-amino-acid chain; its full sequence is MSVSKKDVEYVAELARLEFKEEEKDNFVNDLNKILNYMEKLDELNTDDVDIVVNPYYIENKYREDNVEKSMELKEVIDNAPESLEEYVIVPKVID.

Belongs to the GatC family. Heterotrimer of A, B and C subunits.

It carries out the reaction L-glutamyl-tRNA(Gln) + L-glutamine + ATP + H2O = L-glutaminyl-tRNA(Gln) + L-glutamate + ADP + phosphate + H(+). The catalysed reaction is L-aspartyl-tRNA(Asn) + L-glutamine + ATP + H2O = L-asparaginyl-tRNA(Asn) + L-glutamate + ADP + phosphate + 2 H(+). Functionally, allows the formation of correctly charged Asn-tRNA(Asn) or Gln-tRNA(Gln) through the transamidation of misacylated Asp-tRNA(Asn) or Glu-tRNA(Gln) in organisms which lack either or both of asparaginyl-tRNA or glutaminyl-tRNA synthetases. The reaction takes place in the presence of glutamine and ATP through an activated phospho-Asp-tRNA(Asn) or phospho-Glu-tRNA(Gln). The polypeptide is Aspartyl/glutamyl-tRNA(Asn/Gln) amidotransferase subunit C (Clostridium botulinum (strain 657 / Type Ba4)).